Consider the following 298-residue polypeptide: MDKKSSHPAGAARDILIELRNAGVYRDGRWLVRNVDLSVERGEIVTLIGQNGAGKSTAAKMALHILKPDEGMVSHKPGLRIGYVPQKINIDRTLPLSVERLMTLTGPLPRKEIDAALEAVGIAHLAKAETAHLSGGEFQRALMARALARKPDIMVLDEPVQGVDFSGEAALYELIARLRDDTSCGVLLISHDLHLVMAATDRVICLNGHVCCSGTPRDVTSSPEYVRLFGSRAVGPLAVYEHHHDHTHLPDGRVLYADGTTADPIAGSTMGPRGHCHVEDGHHHDHEHHHHEGGQPRA.

An ABC transporter domain is found at 17-232 (IELRNAGVYR…PEYVRLFGSR (216 aa)). Position 49–56 (49–56 (GQNGAGKS)) interacts with ATP. The interval 273–298 (RGHCHVEDGHHHDHEHHHHEGGQPRA) is disordered. Residues 276–298 (CHVEDGHHHDHEHHHHEGGQPRA) are compositionally biased toward basic and acidic residues.

The protein belongs to the ABC transporter superfamily. Zinc importer (TC 3.A.1.15.5) family. In terms of assembly, the complex is composed of two ATP-binding proteins (ZnuC), two transmembrane proteins (ZnuB) and a solute-binding protein (ZnuA).

The protein localises to the cell inner membrane. The enzyme catalyses Zn(2+)(out) + ATP(in) + H2O(in) = Zn(2+)(in) + ADP(in) + phosphate(in) + H(+)(in). Its function is as follows. Part of the ABC transporter complex ZnuABC involved in zinc import. Responsible for energy coupling to the transport system. This Brucella melitensis biotype 1 (strain ATCC 23456 / CCUG 17765 / NCTC 10094 / 16M) protein is Zinc import ATP-binding protein ZnuC.